The primary structure comprises 172 residues: Centrin-2 (172 aa).

Over residues 1–14 (MASNFKKTTMASSA) the composition is skewed to polar residues. Residues 1–31 (MASNFKKTTMASSAQRKRMSPKPELTEDQKQ) are disordered. An N-acetylalanine modification is found at alanine 2. The interval 2–25 (ASNFKKTTMASSAQRKRMSPKPEL) is required for self-assembly. Position 20 is a phosphoserine (serine 20). Residue lysine 22 forms a Glycyl lysine isopeptide (Lys-Gly) (interchain with G-Cter in SUMO2) linkage. Phosphothreonine is present on threonine 26. EF-hand domains lie at 28–63 (DQKQEIREAFDLFDADGTGTIDIKELKVAMRALGFE), 64–99 (PKKEEIKKMISEIDKEGTGKMNFSDFLTVMTQKMSE), 101–136 (DTKEEILKAFKLFDDDETGKISFKNLKRVAKELGEN), and 137–172 (LTDEELQEMIDEADRDGDGEVNEQEFLRIMKKTSLY). Ca(2+) is bound by residues aspartate 41, aspartate 43, threonine 45, threonine 47, and glutamate 52. Residues aspartate 150, aspartate 152, aspartate 154, glutamate 156, and glutamate 161 each contribute to the Ca(2+) site.

It belongs to the centrin family. As to quaternary structure, monomer. Homooligomer. Interacts with CCP110, SFI1. Component of the XPC complex composed of XPC, RAD23B and CETN2. Component of the nuclear pore complex (NPC)-associated TREX-2 complex (transcription and export complex 2), composed of at least GANP, 2 copies of ENY2, PCID2, SEM1/DSS1, and either centrin CETN2 or centrin CETN3. The TREX-2 complex also associates with ALYREF/ALY and with the nucleoporin NUP153. Interacts with USP49. Forms a microtubule-associated complex with POC5, POC1B and FAM161A. Interacts with CCDC15. In terms of tissue distribution, ubiquitously expressed in all adult tissues tested, with strongest expression in brain, spleen, kidney, small intestine and ovary. Also expressed in the NIH 3T3 fibroblast cell line and peripheral blood lymphocytes.

The protein localises to the cytoplasm. It is found in the cytoskeleton. The protein resides in the microtubule organizing center. Its subcellular location is the centrosome. It localises to the centriole. The protein localises to the nucleus. It is found in the nucleus envelope. The protein resides in the nuclear pore complex. Functionally, plays a fundamental role in microtubule organizing center structure and function. Required for centriole duplication and correct spindle formation. Has a role in regulating cytokinesis and genome stability via cooperation with CALM1 and CCP110. In terms of biological role, involved in global genome nucleotide excision repair (GG-NER) by acting as component of the XPC complex. Cooperatively with Rad23b appears to stabilize Xpc. In vitro, stimulates DNA binding of the Xpc:Rad23b dimer. The XPC complex is proposed to represent the first factor bound at the sites of DNA damage and together with other core recognition factors, Xpa, RPA and the TFIIH complex, is part of the pre-incision (or initial recognition) complex. The XPC complex recognizes a wide spectrum of damaged DNA characterized by distortions of the DNA helix such as single-stranded loops, mismatched bubbles or single-stranded overhangs. The orientation of XPC complex binding appears to be crucial for inducing a productive NER. XPC complex is proposed to recognize and to interact with unpaired bases on the undamaged DNA strand which is followed by recruitment of the TFIIH complex and subsequent scanning for lesions in the opposite strand in a 5'-to-3' direction by the NER machinery. Cyclobutane pyrimidine dimers (CPDs) which are formed upon UV-induced DNA damage esacpe detection by the XPC complex due to a low degree of structural perurbation. Instead they are detected by the UV-DDB complex which in turn recruits and cooperates with the XPC complex in the respective DNA repair. Its function is as follows. As a component of the TREX-2 complex, involved in the export of mRNAs to the cytoplasm through the nuclear pores. This is Centrin-2 (Cetn2) from Mus musculus (Mouse).